The primary structure comprises 144 residues: Deoxyuridine 5'-triphosphate nucleotidohydrolase (144 aa).

Residues 63 to 65 (RSG), Asn76, and 80 to 82 (TID) each bind substrate.

Belongs to the dUTPase family. It depends on Mg(2+) as a cofactor.

It carries out the reaction dUTP + H2O = dUMP + diphosphate + H(+). The protein operates within pyrimidine metabolism; dUMP biosynthesis; dUMP from dCTP (dUTP route): step 2/2. Functionally, this enzyme is involved in nucleotide metabolism: it produces dUMP, the immediate precursor of thymidine nucleotides and it decreases the intracellular concentration of dUTP so that uracil cannot be incorporated into DNA. The polypeptide is Deoxyuridine 5'-triphosphate nucleotidohydrolase (Phocaeicola vulgatus (strain ATCC 8482 / DSM 1447 / JCM 5826 / CCUG 4940 / NBRC 14291 / NCTC 11154) (Bacteroides vulgatus)).